The following is a 259-amino-acid chain: Type III pantothenate kinase (259 aa).

An ATP-binding site is contributed by 6 to 13 (DVGNTNCT). 107–110 (GSDR) serves as a coordination point for substrate. Asp109 (proton acceptor) is an active-site residue. Position 129 (Asp129) interacts with K(+). Position 132 (Thr132) interacts with ATP. A substrate-binding site is contributed by Thr184.

This sequence belongs to the type III pantothenate kinase family. Homodimer. Requires NH4(+) as cofactor. The cofactor is K(+).

It is found in the cytoplasm. The catalysed reaction is (R)-pantothenate + ATP = (R)-4'-phosphopantothenate + ADP + H(+). It functions in the pathway cofactor biosynthesis; coenzyme A biosynthesis; CoA from (R)-pantothenate: step 1/5. In terms of biological role, catalyzes the phosphorylation of pantothenate (Pan), the first step in CoA biosynthesis. This Listeria welshimeri serovar 6b (strain ATCC 35897 / DSM 20650 / CCUG 15529 / CIP 8149 / NCTC 11857 / SLCC 5334 / V8) protein is Type III pantothenate kinase.